Consider the following 114-residue polypeptide: UPF0342 protein SE_1526 (114 aa).

Belongs to the UPF0342 family.

In Staphylococcus epidermidis (strain ATCC 12228 / FDA PCI 1200), this protein is UPF0342 protein SE_1526.